Here is a 589-residue protein sequence, read N- to C-terminus: Oligo-1,6-glucosidase IMA2 (589 aa).

Asp-215 (nucleophile) is an active-site residue. Glu-277 (proton donor) is an active-site residue.

The protein belongs to the glycosyl hydrolase 13 family.

The catalysed reaction is Hydrolysis of (1-&gt;6)-alpha-D-glucosidic linkages in some oligosaccharides produced from starch and glycogen by alpha-amylase, and in isomaltose.. Alpha-glucosidase with specificity for isomaltase, methyl-alpha-glucoside, and palatinose. In Saccharomyces cerevisiae (strain ATCC 204508 / S288c) (Baker's yeast), this protein is Oligo-1,6-glucosidase IMA2 (IMA2).